The primary structure comprises 307 residues: Acetyl-coenzyme A carboxylase carboxyl transferase subunit beta (307 aa).

Positions 1 to 26 are disordered; sequence MAMAEPQDPKKGDKKTAERRGGGWLS. Basic and acidic residues predominate over residues 7–21; sequence QDPKKGDKKTAERRG. The 263-residue stretch at 45–307 folds into the CoA carboxyltransferase N-terminal domain; the sequence is LWVKCPDTGE…LMMGRKRQAA (263 aa).

Belongs to the AccD/PCCB family. Acetyl-CoA carboxylase is a heterohexamer composed of biotin carboxyl carrier protein (AccB), biotin carboxylase (AccC) and two subunits each of ACCase subunit alpha (AccA) and ACCase subunit beta (AccD).

The protein resides in the cytoplasm. It catalyses the reaction N(6)-carboxybiotinyl-L-lysyl-[protein] + acetyl-CoA = N(6)-biotinyl-L-lysyl-[protein] + malonyl-CoA. It participates in lipid metabolism; malonyl-CoA biosynthesis; malonyl-CoA from acetyl-CoA: step 1/1. Its function is as follows. Component of the acetyl coenzyme A carboxylase (ACC) complex. Biotin carboxylase (BC) catalyzes the carboxylation of biotin on its carrier protein (BCCP) and then the CO(2) group is transferred by the transcarboxylase to acetyl-CoA to form malonyl-CoA. The protein is Acetyl-coenzyme A carboxylase carboxyl transferase subunit beta of Caulobacter vibrioides (strain ATCC 19089 / CIP 103742 / CB 15) (Caulobacter crescentus).